The following is a 43-amino-acid chain: Protein PsbN (43 aa).

The chain crosses the membrane as a helical span at residues 5-27; that stretch reads TLVAISISGSLVSFTGYALYTAF.

Belongs to the PsbN family.

Its subcellular location is the plastid. It localises to the chloroplast thylakoid membrane. In terms of biological role, may play a role in photosystem I and II biogenesis. The sequence is that of Protein PsbN from Drimys granadensis.